A 677-amino-acid chain; its full sequence is Zinc finger protein 526 (677 aa).

3 C2H2-type zinc fingers span residues 57–79 (FMCS…QEQH), 109–131 (FQCG…QDAH), and 141–164 (YQCG…KAQH). The tract at residues 167–190 (TAAAKPPVPPPLPPVTPPPPPPAP) is disordered. The span at 172–190 (PPVPPPLPPVTPPPPPPAP) shows a compositional bias: pro residues. The C2H2-type 4 zinc-finger motif lies at 198 to 220 (YECPECSTLCTTPEEFLEHQGTH). Positions 223–232 (SLEKEEHNGL) are enriched in basic and acidic residues. The tract at residues 223–300 (SLEKEEHNGL…RRASHGPASA (78 aa)) is disordered. A compositionally biased stretch (acidic residues) spans 233–257 (EEEEEDDEDDNEETEEEEEAAAEVG). 4 consecutive C2H2-type zinc fingers follow at residues 304-326 (FYCS…GRAH), 331-353 (HECT…LRLH), 359-381 (YLCV…RRAH), and 387-408 (HRCR…RRTH). A disordered region spans residues 408-449 (HAGKSGAPPSAAPPTVASAVASLAPAEPTPPPPAPPTPPAQL). Low complexity predominate over residues 410 to 433 (GKSGAPPSAAPPTVASAVASLAPA). The span at 434 to 449 (EPTPPPPAPPTPPAQL) shows a compositional bias: pro residues. 5 consecutive C2H2-type zinc fingers follow at residues 449–472 (LPCP…RAVH), 479–501 (HRCG…LRTH), 507–529 (FQCH…QLTH), 535–557 (YQCL…RRLH), and 580–602 (YYCG…QRVH). Residues 608 to 627 (LTLQPPRSPPPAPPPPPEPQ) are disordered. Positions 613-626 (PRSPPPAPPPPPEP) are enriched in pro residues.

The protein belongs to the krueppel C2H2-type zinc-finger protein family.

It localises to the nucleus. May be involved in transcriptional regulation. The polypeptide is Zinc finger protein 526 (ZNF526) (Bos taurus (Bovine)).